Consider the following 914-residue polypeptide: Solute carrier family 12 member 9 (914 aa).

Topologically, residues Met-1 to Lys-36 are cytoplasmic. Ser-6 carries the phosphoserine modification. Residues Leu-37 to Phe-57 traverse the membrane as a helical segment. Topologically, residues Leu-58 to Ala-72 are extracellular. The helical transmembrane segment at Leu-73–Ile-93 threads the bilayer. Topologically, residues Ala-94 to Ser-119 are cytoplasmic. A helical transmembrane segment spans residues Ile-120–Val-140. The Extracellular portion of the chain corresponds to Glu-141–Asn-167. A helical membrane pass occupies residues Leu-168 to Leu-188. At Tyr-189–Ser-193 the chain is on the cytoplasmic side. A helical transmembrane segment spans residues Phe-194–Val-214. Over Gly-215–Gly-262 the chain is Extracellular. N-linked (GlcNAc...) asparagine glycosylation is found at Asn-228 and Asn-243. Residues Ala-263 to Ala-283 traverse the membrane as a helical segment. Topologically, residues Gly-284–Ala-297 are cytoplasmic. Residues Ile-298–Phe-318 traverse the membrane as a helical segment. The Extracellular segment spans residues Leu-319–Asp-338. The helical transmembrane segment at Ile-339–Met-359 threads the bilayer. Residues Ser-360–Asp-376 lie on the Cytoplasmic side of the membrane. A helical transmembrane segment spans residues Leu-377–Leu-399. The Extracellular portion of the chain corresponds to Tyr-400–Thr-416. A helical transmembrane segment spans residues Leu-417 to Leu-437. Residues Ser-438 to Cys-466 are Cytoplasmic-facing. A helical membrane pass occupies residues Leu-467–Leu-487. Residues Leu-488–Tyr-740 lie on the Extracellular side of the membrane. A disordered region spans residues Pro-645 to Leu-678. The helical transmembrane segment at Val-741–Trp-761 threads the bilayer. The Cytoplasmic portion of the chain corresponds to His-762 to Leu-914. The disordered stretch occupies residues Gln-844–Pro-864.

The protein belongs to the SLC12A transporter family. Interacts with SLC12A1.

It localises to the cell membrane. It is found in the lysosome membrane. Its function is as follows. May be an inhibitor of SLC12A1. Seems to correspond to a subunit of a multimeric transport system and thus, additional subunits may be required for its function. May play a role in lysosomal ion flux and osmoregulation. In Mus musculus (Mouse), this protein is Solute carrier family 12 member 9 (Slc12a9).